We begin with the raw amino-acid sequence, 492 residues long: Probable malate:quinone oxidoreductase 1 (492 aa).

Belongs to the MQO family. FAD is required as a cofactor.

The catalysed reaction is (S)-malate + a quinone = a quinol + oxaloacetate. It participates in carbohydrate metabolism; tricarboxylic acid cycle; oxaloacetate from (S)-malate (quinone route): step 1/1. The polypeptide is Probable malate:quinone oxidoreductase 1 (Staphylococcus aureus (strain MRSA252)).